Consider the following 182-residue polypeptide: Ribosome-recycling factor (182 aa).

Belongs to the RRF family.

The protein localises to the cytoplasm. Responsible for the release of ribosomes from messenger RNA at the termination of protein biosynthesis. May increase the efficiency of translation by recycling ribosomes from one round of translation to another. This is Ribosome-recycling factor from Mycoplasma capricolum subsp. capricolum (strain California kid / ATCC 27343 / NCTC 10154).